An 87-amino-acid polypeptide reads, in one-letter code: Acyl-CoA-binding protein (87 aa).

The ACB domain maps to 3-87; the sequence is LKEEFEEHAV…KVKQLLEESA (85 aa). An acyl-CoA-binding positions include 30 to 34, Lys56, and Tyr75; that span reads YGLYK.

Belongs to the ACBP family.

Functionally, binds medium- and long-chain acyl-CoA esters with very high affinity and may function as an intracellular carrier of acyl-CoA esters. The polypeptide is Acyl-CoA-binding protein (ACABP) (Fritillaria agrestis (Stinkbells)).